The chain runs to 328 residues: Probable fused nickel transport protein LarMN (328 aa).

The next 8 helical transmembrane spans lie at 8 to 28, 42 to 62, 75 to 95, 103 to 123, 138 to 158, 187 to 207, 229 to 249, and 296 to 316; these read LSPATCGTLVTAMAPVWTVAV, LPMLGIAASLAFLIMMFNLPI, LLAVLIGPWAACLALTVTLLL, GGILAFGANALNMAVIMPFVG, LGLAIGAYLGINMAALVAGIE, MLTAHLLVAGWVEVVFTLLVF, PWIALLLGLAVLSPLGLLASN, and PVSVGYILSAITAVLIFLLLI.

It belongs to the CbiM family. NikM subfamily. In terms of assembly, may form an energy-coupling factor (ECF) transporter complex composed of an ATP-binding protein (A component, LarO), a transmembrane protein (T component, LarQ) and a fused possible substrate-capture protein (S component, LarMN) of unknown stoichiometry.

Its subcellular location is the cell membrane. In terms of biological role, probably part of the energy-coupling factor (ECF) transporter complex LarMNQO involved in nickel import. The protein is Probable fused nickel transport protein LarMN of Lactiplantibacillus plantarum (strain ATCC BAA-793 / NCIMB 8826 / WCFS1) (Lactobacillus plantarum).